A 332-amino-acid polypeptide reads, in one-letter code: Nicotianamine synthase 1 (332 aa).

Belongs to the nicotianamine synthase (NAS)-like family. In terms of tissue distribution, expressed in roots.

The enzyme catalyses 3 S-adenosyl-L-methionine = nicotianamine + 3 S-methyl-5'-thioadenosine + 3 H(+). Synthesizes nicotianamine, a polyamine that is the first intermediate in the synthesis of the phytosiderophores of the mugineic acid type found in gramineae which serve as a sensor for the physiological iron status within the plant, and/or might be involved in the transport of iron. In Oryza sativa subsp. indica (Rice), this protein is Nicotianamine synthase 1 (NAS1).